A 128-amino-acid chain; its full sequence is Cytochrome c-type biogenesis protein CcmE (128 aa).

Over methionine 1 to arginine 8 the chain is Cytoplasmic. The helical; Signal-anchor for type II membrane protein transmembrane segment at leucine 9–asparagine 29 threads the bilayer. At leucine 30–arginine 128 the chain is on the periplasmic side. Heme contacts are provided by histidine 120 and tyrosine 124.

The protein belongs to the CcmE/CycJ family.

It localises to the cell inner membrane. Its function is as follows. Heme chaperone required for the biogenesis of c-type cytochromes. Transiently binds heme delivered by CcmC and transfers the heme to apo-cytochromes in a process facilitated by CcmF and CcmH. This Rickettsia canadensis (strain McKiel) protein is Cytochrome c-type biogenesis protein CcmE.